A 324-amino-acid chain; its full sequence is Glyoxylate/hydroxypyruvate reductase B (324 aa).

Residues arginine 237 and glutamate 266 contribute to the active site. Histidine 285 serves as the catalytic Proton donor.

The protein belongs to the D-isomer specific 2-hydroxyacid dehydrogenase family. GhrB subfamily. In terms of assembly, homodimer.

It localises to the cytoplasm. The enzyme catalyses glycolate + NADP(+) = glyoxylate + NADPH + H(+). It catalyses the reaction (R)-glycerate + NAD(+) = 3-hydroxypyruvate + NADH + H(+). It carries out the reaction (R)-glycerate + NADP(+) = 3-hydroxypyruvate + NADPH + H(+). In terms of biological role, catalyzes the NADPH-dependent reduction of glyoxylate and hydroxypyruvate into glycolate and glycerate, respectively. This Shigella boydii serotype 18 (strain CDC 3083-94 / BS512) protein is Glyoxylate/hydroxypyruvate reductase B.